We begin with the raw amino-acid sequence, 427 residues long: Glutamate-1-semialdehyde 2,1-aminomutase (427 aa).

At K265 the chain carries N6-(pyridoxal phosphate)lysine.

The protein belongs to the class-III pyridoxal-phosphate-dependent aminotransferase family. HemL subfamily. Homodimer. Pyridoxal 5'-phosphate is required as a cofactor.

The protein resides in the cytoplasm. It carries out the reaction (S)-4-amino-5-oxopentanoate = 5-aminolevulinate. The protein operates within porphyrin-containing compound metabolism; protoporphyrin-IX biosynthesis; 5-aminolevulinate from L-glutamyl-tRNA(Glu): step 2/2. The protein is Glutamate-1-semialdehyde 2,1-aminomutase of Nitratiruptor sp. (strain SB155-2).